The chain runs to 261 residues: uncharacterized protein (261 aa).

A compositionally biased stretch (polar residues) spans 20–34 (TMSTPFLESDNSNTQ). The disordered stretch occupies residues 20-55 (TMSTPFLESDNSNTQSISGRIGSNNNSNSKNSGGIG). Over residues 35-51 (SISGRIGSNNNSNSKNS) the composition is skewed to low complexity. The next 3 membrane-spanning stretches (helical) occupy residues 113-133 (LFSG…ILLL), 183-200 (LIFW…ILFF), and 204-226 (IISL…MANV).

It belongs to the TVP23 family.

The protein localises to the membrane. This is an uncharacterized protein from Dictyostelium discoideum (Social amoeba).